The chain runs to 235 residues: Ribosomal RNA small subunit methyltransferase G (235 aa).

Residues Gly75, Phe80, 126-127 (AE), and Arg145 each bind S-adenosyl-L-methionine.

The protein belongs to the methyltransferase superfamily. RNA methyltransferase RsmG family.

The protein resides in the cytoplasm. Specifically methylates the N7 position of a guanine in 16S rRNA. In Carboxydothermus hydrogenoformans (strain ATCC BAA-161 / DSM 6008 / Z-2901), this protein is Ribosomal RNA small subunit methyltransferase G.